A 341-amino-acid polypeptide reads, in one-letter code: DnaJ homolog subfamily C member 22 (341 aa).

The TM2 domain maps to 3-50 (KGLLVTYALWAVGGPAGLHHLYLGRDSHALLWMLTLGGGGLGWLWEFW). Helical transmembrane passes span 5 to 25 (LLVT…HLYL), 30 to 50 (HALL…WEFW), 81 to 101 (FAAQ…SLSS), 105 to 125 (FYIV…AAVG), 135 to 155 (LGAA…ILPI), 185 to 205 (LGLA…CNTA), and 218 to 238 (FLNW…VLLL). Residues 277 to 341 (LAYQVLGLSE…QPRKPRGSRR (65 aa)) enclose the J domain.

The protein localises to the membrane. In terms of biological role, may function as a co-chaperone. This chain is DnaJ homolog subfamily C member 22 (DNAJC22), found in Pongo abelii (Sumatran orangutan).